We begin with the raw amino-acid sequence, 113 residues long: Retrotransposon Gag-like protein 8 (113 aa).

Belongs to the FAM127 family.

The protein is Retrotransposon Gag-like protein 8 (RTL8A) of Bos taurus (Bovine).